Consider the following 299-residue polypeptide: 4-diphosphocytidyl-2-C-methyl-D-erythritol kinase (299 aa).

The active site involves lysine 17. An ATP-binding site is contributed by 99 to 109 (PLASGLGGGSS). Residue aspartate 142 is part of the active site.

It belongs to the GHMP kinase family. IspE subfamily.

The catalysed reaction is 4-CDP-2-C-methyl-D-erythritol + ATP = 4-CDP-2-C-methyl-D-erythritol 2-phosphate + ADP + H(+). It participates in isoprenoid biosynthesis; isopentenyl diphosphate biosynthesis via DXP pathway; isopentenyl diphosphate from 1-deoxy-D-xylulose 5-phosphate: step 3/6. Catalyzes the phosphorylation of the position 2 hydroxy group of 4-diphosphocytidyl-2C-methyl-D-erythritol. This chain is 4-diphosphocytidyl-2-C-methyl-D-erythritol kinase, found in Deinococcus radiodurans (strain ATCC 13939 / DSM 20539 / JCM 16871 / CCUG 27074 / LMG 4051 / NBRC 15346 / NCIMB 9279 / VKM B-1422 / R1).